We begin with the raw amino-acid sequence, 452 residues long: DNA primase DnaG (452 aa).

The Toprim domain maps to 172-248 (DTVIIVEGRA…DIDYIARAPP (77 aa)). 3 residues coordinate Mg(2+): glutamate 178, aspartate 222, and aspartate 224. The tract at residues 289–320 (KKQIEQAQVQPSAAPTSPQPQPESTQPTQPIQ) is disordered. The segment covering 294–320 (QAQVQPSAAPTSPQPQPESTQPTQPIQ) has biased composition (low complexity).

The protein belongs to the archaeal DnaG primase family. Forms a ternary complex with MCM helicase and DNA. Component of the archaeal exosome complex. Mg(2+) serves as cofactor.

It carries out the reaction ssDNA + n NTP = ssDNA/pppN(pN)n-1 hybrid + (n-1) diphosphate.. In terms of biological role, RNA polymerase that catalyzes the synthesis of short RNA molecules used as primers for DNA polymerase during DNA replication. Also part of the exosome, which is a complex involved in RNA degradation. Acts as a poly(A)-binding protein that enhances the interaction between heteromeric, adenine-rich transcripts and the exosome. This Caldivirga maquilingensis (strain ATCC 700844 / DSM 13496 / JCM 10307 / IC-167) protein is DNA primase DnaG.